A 209-amino-acid chain; its full sequence is MFDPVDTYMNTLVPMVVEQTSRGERAYDIFSRLLKERIIFINGPIHDGMSHLIVAQLLHLEAENPNKEISIYINSPGGVVTSGLSIYDTMQYIKPKCSTLVIGQAASMGSVLLAGGEKGMRFSLPNSRIMVHQPSGGYQGQASDIMIHAAETQKLKDRLYDIYVKHTGQTKKAVEKALDRDNFMSPEEAKEWGHIDEIVESRSKGDDAE.

Residue Ser-107 is the Nucleophile of the active site. His-132 is a catalytic residue.

The protein belongs to the peptidase S14 family. In terms of assembly, fourteen ClpP subunits assemble into 2 heptameric rings which stack back to back to give a disk-like structure with a central cavity, resembling the structure of eukaryotic proteasomes.

The protein localises to the cytoplasm. The catalysed reaction is Hydrolysis of proteins to small peptides in the presence of ATP and magnesium. alpha-casein is the usual test substrate. In the absence of ATP, only oligopeptides shorter than five residues are hydrolyzed (such as succinyl-Leu-Tyr-|-NHMec, and Leu-Tyr-Leu-|-Tyr-Trp, in which cleavage of the -Tyr-|-Leu- and -Tyr-|-Trp bonds also occurs).. Functionally, cleaves peptides in various proteins in a process that requires ATP hydrolysis. Has a chymotrypsin-like activity. Plays a major role in the degradation of misfolded proteins. The protein is ATP-dependent Clp protease proteolytic subunit of Ruegeria pomeroyi (strain ATCC 700808 / DSM 15171 / DSS-3) (Silicibacter pomeroyi).